We begin with the raw amino-acid sequence, 240 residues long: MAASRTRSWLRRTGGVLMALLCLFLIYELAMFSMVVWYAHRDPGSSAIMREEISRLRETDPKAQLSYTWVPYDRINVTLKRAVIASEDANFTEHDGVEWDAIRKAWAYNQNQQAQGRATIRGGSTITQQLAKNLFLSGSRSYLRKGQELILTYMIEHVMSKERILELYLNIAEWGVGIFGAEAAARHYYGISAANLNASQSARLAAMLPNPRYYDKHRSTRYLNSRTAILLRRMRMVDIP.

Residues 16 to 36 (VLMALLCLFLIYELAMFSMVV) traverse the membrane as a helical segment.

This sequence belongs to the glycosyltransferase 51 family.

It is found in the cell inner membrane. The catalysed reaction is [GlcNAc-(1-&gt;4)-Mur2Ac(oyl-L-Ala-gamma-D-Glu-L-Lys-D-Ala-D-Ala)](n)-di-trans,octa-cis-undecaprenyl diphosphate + beta-D-GlcNAc-(1-&gt;4)-Mur2Ac(oyl-L-Ala-gamma-D-Glu-L-Lys-D-Ala-D-Ala)-di-trans,octa-cis-undecaprenyl diphosphate = [GlcNAc-(1-&gt;4)-Mur2Ac(oyl-L-Ala-gamma-D-Glu-L-Lys-D-Ala-D-Ala)](n+1)-di-trans,octa-cis-undecaprenyl diphosphate + di-trans,octa-cis-undecaprenyl diphosphate + H(+). The protein operates within cell wall biogenesis; peptidoglycan biosynthesis. Its function is as follows. Peptidoglycan polymerase that catalyzes glycan chain elongation from lipid-linked precursors. This chain is Biosynthetic peptidoglycan transglycosylase, found in Bordetella avium (strain 197N).